Consider the following 370-residue polypeptide: Anthranilate phosphoribosyltransferase (370 aa).

Residues G82, 85-86 (GD), T90, 92-95 (NVST), 110-118 (KHGNRAATS), and S122 each bind 5-phospho-alpha-D-ribose 1-diphosphate. Position 82 (G82) interacts with anthranilate. Residue S94 coordinates Mg(2+). N113 is a binding site for anthranilate. R168 provides a ligand contact to anthranilate. Mg(2+)-binding residues include D226 and E227.

This sequence belongs to the anthranilate phosphoribosyltransferase family. As to quaternary structure, homodimer. The cofactor is Mg(2+).

It catalyses the reaction N-(5-phospho-beta-D-ribosyl)anthranilate + diphosphate = 5-phospho-alpha-D-ribose 1-diphosphate + anthranilate. It functions in the pathway amino-acid biosynthesis; L-tryptophan biosynthesis; L-tryptophan from chorismate: step 2/5. Its function is as follows. Catalyzes the transfer of the phosphoribosyl group of 5-phosphorylribose-1-pyrophosphate (PRPP) to anthranilate to yield N-(5'-phosphoribosyl)-anthranilate (PRA). The polypeptide is Anthranilate phosphoribosyltransferase (Methanosarcina mazei (strain ATCC BAA-159 / DSM 3647 / Goe1 / Go1 / JCM 11833 / OCM 88) (Methanosarcina frisia)).